A 280-amino-acid chain; its full sequence is MAPITGSNFHLHLVSDSTGETLITVSRAVVAQYANVTPVEHVYPLVRSQKQLDRVLAEIEEEPGIVLFTLLEKDLVERLEAKCQEINSPSLSIIGPVMQLFQAYLGAATIGRVGAQHTLNADYFRRIDALNYTMMHDDGQHVEGLEEADVVLVGVSRTSKTPTSIYLANRGIRTANVPLVPGIAIPRQLESLRTPLVVSLHAAPERLIQVRQNRLLSIGTRAGNDTYIDRQSVADEVTYARRLSAKHDWVQLDVTRRSIEETAAAIMKLFADRQRQRQPE.

154-161 (GVSRTSKT) serves as a coordination point for ADP.

It belongs to the pyruvate, phosphate/water dikinase regulatory protein family. PDRP subfamily.

The catalysed reaction is N(tele)-phospho-L-histidyl/L-threonyl-[pyruvate, phosphate dikinase] + ADP = N(tele)-phospho-L-histidyl/O-phospho-L-threonyl-[pyruvate, phosphate dikinase] + AMP + H(+). The enzyme catalyses N(tele)-phospho-L-histidyl/O-phospho-L-threonyl-[pyruvate, phosphate dikinase] + phosphate + H(+) = N(tele)-phospho-L-histidyl/L-threonyl-[pyruvate, phosphate dikinase] + diphosphate. Bifunctional serine/threonine kinase and phosphorylase involved in the regulation of the pyruvate, phosphate dikinase (PPDK) by catalyzing its phosphorylation/dephosphorylation. The chain is Putative pyruvate, phosphate dikinase regulatory protein from Nitrobacter hamburgensis (strain DSM 10229 / NCIMB 13809 / X14).